Here is a 387-residue protein sequence, read N- to C-terminus: Alpha-maltose-1-phosphate synthase (387 aa).

This sequence belongs to the glycosyltransferase group 1 family.

The catalysed reaction is ADP-alpha-D-glucose + alpha-D-glucose 1-phosphate = alpha-maltose 1-phosphate + ADP + H(+). It functions in the pathway capsule biogenesis; capsule polysaccharide biosynthesis. Its pathway is glycan biosynthesis; glycogen biosynthesis. Functionally, involved in the biosynthesis of the maltose-1-phosphate (M1P) building block required for alpha-glucan production by the key enzyme GlgE. Catalyzes the formation of an alpha-1,4 linkage between glucose from ADP-glucose and glucose 1-phosphate (G1P) to yield maltose-1-phosphate (M1P). The protein is Alpha-maltose-1-phosphate synthase of Mycobacterium tuberculosis (strain CDC 1551 / Oshkosh).